Reading from the N-terminus, the 887-residue chain is Bifunctional uridylyltransferase/uridylyl-removing enzyme (887 aa).

Residues Met1 to Ile329 form a uridylyltransferase region. The uridylyl-removing stretch occupies residues Ile330–Val686. Positions Val448–Leu570 constitute an HD domain. ACT domains lie at Glu687–Ser772 and Val796–Pro871. The disordered stretch occupies residues Thr864–Arg887.

This sequence belongs to the GlnD family. Requires Mg(2+) as cofactor.

It carries out the reaction [protein-PII]-L-tyrosine + UTP = [protein-PII]-uridylyl-L-tyrosine + diphosphate. The enzyme catalyses [protein-PII]-uridylyl-L-tyrosine + H2O = [protein-PII]-L-tyrosine + UMP + H(+). With respect to regulation, uridylyltransferase (UTase) activity is inhibited by glutamine, while glutamine activates uridylyl-removing (UR) activity. Its function is as follows. Modifies, by uridylylation and deuridylylation, the PII regulatory proteins (GlnB and homologs), in response to the nitrogen status of the cell that GlnD senses through the glutamine level. Under low glutamine levels, catalyzes the conversion of the PII proteins and UTP to PII-UMP and PPi, while under higher glutamine levels, GlnD hydrolyzes PII-UMP to PII and UMP (deuridylylation). Thus, controls uridylylation state and activity of the PII proteins, and plays an important role in the regulation of nitrogen assimilation and metabolism. This Nitrosospira multiformis (strain ATCC 25196 / NCIMB 11849 / C 71) protein is Bifunctional uridylyltransferase/uridylyl-removing enzyme.